The chain runs to 621 residues: tRNA uridine 5-carboxymethylaminomethyl modification enzyme MnmG (621 aa).

8 to 13 provides a ligand contact to FAD; the sequence is GAGHAG. Residue 269–283 participates in NAD(+) binding; the sequence is GPRYCPSVEDKIFRF.

The protein belongs to the MnmG family. Homodimer. Heterotetramer of two MnmE and two MnmG subunits. FAD serves as cofactor.

It localises to the cytoplasm. Functionally, NAD-binding protein involved in the addition of a carboxymethylaminomethyl (cmnm) group at the wobble position (U34) of certain tRNAs, forming tRNA-cmnm(5)s(2)U34. This Chlorobium phaeobacteroides (strain DSM 266 / SMG 266 / 2430) protein is tRNA uridine 5-carboxymethylaminomethyl modification enzyme MnmG.